The following is a 596-amino-acid chain: Fructan 1-exohydrolase w3 (596 aa).

A signal peptide spans M1 to S20. D75 is an active-site residue. N168, N236, and N248 each carry an N-linked (GlcNAc...) asparagine glycan. Residues C446 and C492 are joined by a disulfide bond.

This sequence belongs to the glycosyl hydrolase 32 family. As to expression, expressed in the stem, particularly the penultimate internode. Little expression is detected in roots and in the peduncle part of the stem.

It carries out the reaction Hydrolysis of terminal, non-reducing (2-&gt;1)-linked beta-D-fructofuranose residues in fructans.. Its activity is regulated as follows. Inhibited by sucrose. Its function is as follows. Hydrolyzes inulin-type beta-(2,1)-fructans and beta-(2,1)-linkages in branched fructans. Has low activity against beta-(2,6)-linked fructans. May play a role as a beta-(2,1)-trimmer during graminan biosynthesis. This chain is Fructan 1-exohydrolase w3, found in Triticum aestivum (Wheat).